The sequence spans 235 residues: Cytidylate kinase (235 aa).

16-24 lines the ATP pocket; it reads GPAASGKST.

The protein belongs to the cytidylate kinase family. Type 1 subfamily.

It is found in the cytoplasm. The enzyme catalyses CMP + ATP = CDP + ADP. It carries out the reaction dCMP + ATP = dCDP + ADP. This is Cytidylate kinase from Chloroherpeton thalassium (strain ATCC 35110 / GB-78).